Here is a 93-residue protein sequence, read N- to C-terminus: Small ribosomal subunit protein bS20c (93 aa).

This sequence belongs to the bacterial ribosomal protein bS20 family.

The protein resides in the plastid. It localises to the chloroplast. Functionally, binds directly to 16S ribosomal RNA. This is Small ribosomal subunit protein bS20c from Thalassiosira pseudonana (Marine diatom).